Here is a 648-residue protein sequence, read N- to C-terminus: Proton myo-inositol cotransporter (648 aa).

Residues 1 to 76 (MSRKASENVE…AARRQFQQDE (76 aa)) are Cytoplasmic-facing. 3 positions are modified to phosphoserine: Ser6, Ser47, and Ser50. Residues 77–97 (TPAFVYVVAVFSALGGFLFGY) traverse the membrane as a helical segment. Residues 98 to 125 (DTGVVSGAMLLLKRQLSLDALWQELLVS) lie on the Extracellular side of the membrane. The helical transmembrane segment at 126–146 (STVGAAAVSALAGGALNGVFG) threads the bilayer. Over 147-148 (RR) the chain is Cytoplasmic. A helical membrane pass occupies residues 149–169 (AAILLASALFTAGSAVLAAAN). Topologically, residues 170–178 (NKETLLAGR) are extracellular. Residues 179–199 (LVVGLGIGIASMTVPVYIAEV) traverse the membrane as a helical segment. At 200-212 (SPPNLRGRLVTIN) the chain is on the cytoplasmic side. Residues 213 to 233 (TLFITGGQFFASVVDGAFSYL) traverse the membrane as a helical segment. At 234-239 (QKDGWR) the chain is on the extracellular side. Residues 240–260 (YMLGLAAVPAVIQFFGFLFLP) traverse the membrane as a helical segment. Topologically, residues 261–324 (ESPRWLIQKG…RMLSYPPTRR (64 aa)) are cytoplasmic. A helical membrane pass occupies residues 325–345 (ALIVGCGLQMFQQLSGINTIM). Residues 346–363 (YYSATILQMSGVEDDRLA) are Extracellular-facing. The helical transmembrane segment at 364–384 (IWLASVTAFTNFIFTLVGVWL) threads the bilayer. At 385 to 393 (VEKVGRRKL) the chain is on the cytoplasmic side. The chain crosses the membrane as a helical span at residues 394–414 (TFGSLAGTTVALIILALGFVL). Residues 415-508 (SAQVSPRITF…NFCPTPYSWT (94 aa)) are Extracellular-facing. Residues Asn433, Asn458, and Asn485 are each glycosylated (N-linked (GlcNAc...) asparagine). The helical transmembrane segment at 509–529 (ALLGLILYLVFFAPGMGPMPW) threads the bilayer. At 530–549 (TVNSEIYPLWARSTGNACSS) the chain is on the cytoplasmic side. Residues 550 to 570 (GINWIFNVLVSLTFLHTAEYL) traverse the membrane as a helical segment. Residues 571 to 573 (TYY) are Extracellular-facing. Residues 574–594 (GAFFLYAGFAAVGLLFIYGCL) traverse the membrane as a helical segment. Residues 595–648 (PETKGKKLEEIESLFDNRLCTCGTSDSDEGRYIEYIRVKGSNYHLSDNDASDVE) lie on the Cytoplasmic side of the membrane. Phosphoserine is present on residues Ser640 and Ser645.

It belongs to the major facilitator superfamily. Sugar transporter (TC 2.A.1.1) family. Glycosylated. As to expression, predominantly expressed in the brain.

The protein localises to the cell membrane. It carries out the reaction myo-inositol(out) + H(+)(out) = myo-inositol(in) + H(+)(in). H(+)-myo-inositol cotransporter. Can also transport related stereoisomers. This is Proton myo-inositol cotransporter from Homo sapiens (Human).